A 166-amino-acid chain; its full sequence is Large ribosomal subunit protein uL10 (166 aa).

Belongs to the universal ribosomal protein uL10 family. Part of the ribosomal stalk of the 50S ribosomal subunit. The N-terminus interacts with L11 and the large rRNA to form the base of the stalk. The C-terminus forms an elongated spine to which L12 dimers bind in a sequential fashion forming a multimeric L10(L12)X complex.

Its function is as follows. Forms part of the ribosomal stalk, playing a central role in the interaction of the ribosome with GTP-bound translation factors. The protein is Large ribosomal subunit protein uL10 of Aeromonas hydrophila subsp. hydrophila (strain ATCC 7966 / DSM 30187 / BCRC 13018 / CCUG 14551 / JCM 1027 / KCTC 2358 / NCIMB 9240 / NCTC 8049).